The following is a 1007-amino-acid chain: Beta-galactosidase (1007 aa).

The segment at 29-48 (TIPPHSDHESFQSQEELEEG) is disordered. The active-site Proton donor is the glutamate 465. Glutamate 532 functions as the Nucleophile in the catalytic mechanism.

The protein belongs to the glycosyl hydrolase 2 family. Monomer.

The enzyme catalyses Hydrolysis of terminal non-reducing beta-D-galactose residues in beta-D-galactosides.. This is Beta-galactosidase (lacZ) from Lactobacillus delbrueckii subsp. bulgaricus.